We begin with the raw amino-acid sequence, 314 residues long: Deoxyhypusine hydroxylase (314 aa).

M1 carries the post-translational modification N-acetylmethionine. HEAT-like PBS-type repeat units follow at residues 61–87, 94–120, 188–214, 219–245, and 252–278; these read LAHEAAFALGQMQDAEAIPALESVLND, VRHEAAEALGAIGLAGNVNILKKSLSS, ERYAALFALRNHGGEEAVSAIVDSLSA, LRHEVAYVLGQLQSKTALATLSKVLRD, and VRHEAAEALGSIADEQSIALLEEFSKD. H63, E64, H96, and E97 together coordinate Fe cation. Fe cation contacts are provided by H221, E222, H254, and E255.

The protein belongs to the deoxyhypusine hydroxylase family. Fe(2+) serves as cofactor.

It catalyses the reaction [eIF5A protein]-deoxyhypusine + AH2 + O2 = [eIF5A protein]-hypusine + A + H2O. It functions in the pathway protein modification; eIF5A hypusination. Catalyzes the hydroxylation of the N(6)-(4-aminobutyl)-L-lysine intermediate to form hypusine, an essential post-translational modification only found in mature eIF-5A factor. The sequence is that of Deoxyhypusine hydroxylase from Arabidopsis thaliana (Mouse-ear cress).